The sequence spans 620 residues: Kelch-like protein 8 (620 aa).

Polar residues predominate over residues 1 to 10 (MASDSMSSKQ). Residues 1–35 (MASDSMSSKQARNHITKGKRQQQHQQIKNRSSISD) form a disordered region. Ala2 carries the N-acetylalanine modification. A compositionally biased stretch (basic residues) spans 11–22 (ARNHITKGKRQQ). The span at 23-34 (QHQQIKNRSSIS) shows a compositional bias: polar residues. One can recognise a BTB domain in the interval 67 to 134 (CDVTLKVGSK…VYSSRLTLTV (68 aa)). The BACK domain occupies 169–270 (CLAVRAFAES…LPVDFLMGVV (102 aa)). 6 Kelch repeats span residues 319–366 (VLFC…SVEG), 367–413 (KVYA…SLGG), 415–460 (IYAI…ALVN), 462–507 (VYAV…KLHG), 508–554 (CLYV…TVMG), and 556–601 (IFAV…VCSC).

Component of the BCR(KLHL8) E3 ubiquitin ligase complex, at least composed of CUL3, KLHL8 and RBX1. Interacts with RAPSN.

The protein operates within protein modification; protein ubiquitination. Functionally, substrate-specific adapter of a BCR (BTB-CUL3-RBX1) E3 ubiquitin ligase complex required for The BCR(KLHL8) ubiquitin ligase complex mediates ubiquitination and degradation of RAPSN. The protein is Kelch-like protein 8 (KLHL8) of Homo sapiens (Human).